A 222-amino-acid polypeptide reads, in one-letter code: Germin-like protein 11-1 (222 aa).

The N-terminal stretch at 1 to 23 (MKLSTVLCCYLLLLGLFAPEIIS) is a signal peptide. A disulfide bridge connects residues Cys-32 and Cys-49. The region spanning 72–195 (DNMVRSSANI…AMFAPDSEVA (124 aa)) is the Cupin type-1 domain. His-111, His-113, Glu-118, and His-157 together coordinate Mn(2+).

It belongs to the germin family. In terms of assembly, oligomer (believed to be a pentamer but probably hexamer).

It localises to the secreted. Its subcellular location is the extracellular space. The protein localises to the apoplast. In terms of biological role, may play a role in plant defense. Probably has no oxalate oxidase activity even if the active site is conserved. The protein is Germin-like protein 11-1 of Oryza sativa subsp. japonica (Rice).